The following is a 463-amino-acid chain: Maintenance of mitochondrial morphology protein 1-2 (463 aa).

At 1–23 (MVIPAELIQKALKQQSGWGFTEG) the chain is on the lumenal side. Residues 24-44 (LVLGQLSVIITVIIILKFVIF) traverse the membrane as a helical segment. The Cytoplasmic portion of the chain corresponds to 45–463 (AENKSPKKGN…TGADTASGSS (419 aa)). Residues 72–152 (GGQTANGVKT…VAGSTSNLAV (81 aa)) are disordered. The segment covering 108–122 (RPGSSRVSMVRSTSG) has biased composition (polar residues). The region spanning 205-435 (APESLDWFNV…EPHQMIFILP (231 aa)) is the SMP-LTD domain.

It belongs to the MMM1 family. In terms of assembly, homodimer. Component of the ER-mitochondria encounter structure (ERMES) or MDM complex, composed of MMM1, MDM10, MDM12 and MDM34. An MMM1 homodimer associates with one molecule of MDM12 on each side in a pairwise head-to-tail manner, and the SMP-LTD domains of MMM1 and MDM12 generate a continuous hydrophobic tunnel for phospholipid trafficking.

Its subcellular location is the endoplasmic reticulum membrane. Functionally, component of the ERMES/MDM complex, which serves as a molecular tether to connect the endoplasmic reticulum (ER) and mitochondria. Components of this complex are involved in the control of mitochondrial shape and protein biogenesis, and function in nonvesicular lipid trafficking between the ER and mitochondria. The MDM12-MMM1 subcomplex functions in the major beta-barrel assembly pathway that is responsible for biogenesis of all outer membrane beta-barrel proteins, and acts in a late step after the SAM complex. The MDM10-MDM12-MMM1 subcomplex further acts in the TOM40-specific pathway after the action of the MDM12-MMM1 complex. Essential for establishing and maintaining the structure of mitochondria and maintenance of mtDNA nucleoids. The chain is Maintenance of mitochondrial morphology protein 1-2 from Yarrowia lipolytica (strain CLIB 122 / E 150) (Yeast).